A 599-amino-acid chain; its full sequence is MFS-type transporter ucsM (599 aa).

The span at 23-34 shows a compositional bias: basic and acidic residues; it reads AHHHGKEREAHR. The segment at 23-42 is disordered; sequence AHHHGKEREAHRQSLSSVPG. The next 8 membrane-spanning stretches (helical) occupy residues 147 to 167, 178 to 198, 204 to 224, 263 to 283, 291 to 311, 386 to 406, 424 to 444, and 454 to 474; these read VALGLVFSFLSYVIPIFGAWL, ILIGVLIGGVAHIIMIAGAVP, GKGTAPFLVSLFLLALGAGLF, IMLIFYALINVGAFYSLATVY, WLAFLLPGIIYLLLPLMLWYL, IFLYFPIYHLNDGGVGTILPS, FNPITIMITVPVLTYIVYPAL, and ISRITLGFWLAVISGLVSSLV. N-linked (GlcNAc...) asparagine glycosylation is present at asparagine 517. 2 helical membrane passes run 539–559 and 563–583; these read LFLFSTALSSALGLILTPAIV and LVWVWAGPTIALAVQTVIFWV.

Belongs to the major facilitator superfamily. Proton-dependent oligopeptide transporter (POT/PTR) (TC 2.A.17) family.

It localises to the membrane. Its function is as follows. MFS-type transporter; part of the gene cluster that mediates the biosynthesis of UCS1025A, a member of the pyrrolizidinone family that acts as a strong telomerase inhibitor and displays potent antibacterial and antitumor properties. These compounds share a hemiaminal-containing pyrrolizidinone core fused with a gamma-lactone, giving a furopyrrolizidine that is connected to a decalin fragment. This Acremonium sp protein is MFS-type transporter ucsM.